We begin with the raw amino-acid sequence, 572 residues long: Pentatricopeptide repeat-containing protein At1g26900, mitochondrial (572 aa).

The transit peptide at 1-117 (MTLAITSRLR…RAFSVFNQLR (117 aa)) directs the protein to the mitochondrion. 12 PPR repeats span residues 89-123 (NLFM…GLTL), 124-158 (DRFS…GFMV), 159-189 (FTDL…MPQS), 191-225 (DAVT…EVVV), 226-260 (NVST…GLDL), 261-291 (DLHL…AIRK), 292-326 (DVVT…KMKP), 327-361 (NSST…RIAL), 362-392 (DAIL…MKDK), 393-427 (DVKS…NCKV), 430-460 (NEIT…MVEA), and 466-496 (KVEH…LPIT). Positions 501–572 (AWRALLAACR…EAGYSAIEIE (72 aa)) are type E motif.

The protein belongs to the PPR family. PCMP-E subfamily.

The protein localises to the mitochondrion. The sequence is that of Pentatricopeptide repeat-containing protein At1g26900, mitochondrial (PCMP-E54) from Arabidopsis thaliana (Mouse-ear cress).